The primary structure comprises 445 residues: tRNA modification GTPase MnmE (445 aa).

R21, E78, and K117 together coordinate (6S)-5-formyl-5,6,7,8-tetrahydrofolate. Residues 213–370 (GFRIALVGAP…LKETLSERVV (158 aa)) form the TrmE-type G domain. GTP is bound by residues 223–228 (NAGKST), 242–248 (TATPGTT), and 267–270 (DTAG). Mg(2+) contacts are provided by S227 and T248. Position 445 (K445) interacts with (6S)-5-formyl-5,6,7,8-tetrahydrofolate.

It belongs to the TRAFAC class TrmE-Era-EngA-EngB-Septin-like GTPase superfamily. TrmE GTPase family. In terms of assembly, homodimer. Heterotetramer of two MnmE and two MnmG subunits. The cofactor is K(+).

It is found in the cytoplasm. Its function is as follows. Exhibits a very high intrinsic GTPase hydrolysis rate. Involved in the addition of a carboxymethylaminomethyl (cmnm) group at the wobble position (U34) of certain tRNAs, forming tRNA-cmnm(5)s(2)U34. The sequence is that of tRNA modification GTPase MnmE from Phenylobacterium zucineum (strain HLK1).